Consider the following 134-residue polypeptide: Small ribosomal subunit protein uS8c (134 aa).

The protein belongs to the universal ribosomal protein uS8 family. Part of the 30S ribosomal subunit.

The protein localises to the plastid. It localises to the chloroplast. Functionally, one of the primary rRNA binding proteins, it binds directly to 16S rRNA central domain where it helps coordinate assembly of the platform of the 30S subunit. In Ipomoea purpurea (Common morning glory), this protein is Small ribosomal subunit protein uS8c (rps8).